A 504-amino-acid polypeptide reads, in one-letter code: Anaerobic nitric oxide reductase transcription regulator NorR (504 aa).

Aspartate 57 carries the post-translational modification 4-aspartylphosphate. The 230-residue stretch at 187 to 416 folds into the Sigma-54 factor interaction domain; that stretch reads MIGLSPGMTQ…LEHAIHRAVV (230 aa). ATP contacts are provided by residues 215–222 and 278–287; these read GETGTGKE and ADNGTLFLDE. Residues 479-498 constitute a DNA-binding region (H-T-H motif); that stretch reads WAASARMLETDVANLHRLAK.

It functions in the pathway nitrogen metabolism; nitric oxide reduction. Its function is as follows. Required for the expression of anaerobic nitric oxide (NO) reductase, acts as a transcriptional activator for at least the norVW operon. Activation also requires sigma-54. The chain is Anaerobic nitric oxide reductase transcription regulator NorR from Escherichia coli (strain SMS-3-5 / SECEC).